Reading from the N-terminus, the 303-residue chain is Methionyl-tRNA formyltransferase (303 aa).

108-111 (SDLP) provides a ligand contact to (6S)-5,6,7,8-tetrahydrofolate.

It belongs to the Fmt family.

It carries out the reaction L-methionyl-tRNA(fMet) + (6R)-10-formyltetrahydrofolate = N-formyl-L-methionyl-tRNA(fMet) + (6S)-5,6,7,8-tetrahydrofolate + H(+). In terms of biological role, attaches a formyl group to the free amino group of methionyl-tRNA(fMet). The formyl group appears to play a dual role in the initiator identity of N-formylmethionyl-tRNA by promoting its recognition by IF2 and preventing the misappropriation of this tRNA by the elongation apparatus. The polypeptide is Methionyl-tRNA formyltransferase (Rickettsia africae (strain ESF-5)).